A 143-amino-acid chain; its full sequence is uncharacterized protein (143 aa).

Residues 1 to 32 (MITNLRRRTAMAAAGLGAALGLGILLVPTVDA) form the signal peptide.

It to M.tuberculosis Rv1269c.

This is an uncharacterized protein from Mycobacterium tuberculosis (strain CDC 1551 / Oshkosh).